The following is a 274-amino-acid chain: MSGYQHELPPNISKTSPAPEEAREELLQQCEAIWKQMEECQSKLTMSGPETLPETDVQLYLLMMQVKALTAEYEQWQKRTPEIISDNQDVLLAVGKEELEKIAQELEMVLSSVQAKNKKLKKDLEKEQNWLDGQQKIVDALTSRQDELKNQLTAFSEKRVYQDIAGKLYKVRAHKEELLSALGDFLEEHFPLPQEQENQSKKKKGQSGKKSVQLMTLHEILEILINKLMTTPHDPYLVLEPHHWPPYIEMLLRYGIALRHPEDPKRIRLEAFHQ.

A disordered region spans residues 1–21 (MSGYQHELPPNISKTSPAPEE). A coiled-coil region spans residues 96-159 (KEELEKIAQE…NQLTAFSEKR (64 aa)).

The protein belongs to the CENP-K/MCM22 family.

The protein localises to the nucleus. Its subcellular location is the chromosome. The protein resides in the centromere. It is found in the kinetochore. Functionally, probable component of a centromeric complex involved in assembly of kinetochore proteins, mitotic progression and chromosome segregation. This is Centromere protein K (cenpk) from Xenopus laevis (African clawed frog).